The following is a 607-amino-acid chain: UvrABC system protein C (607 aa).

Residues 16–94 form the GIY-YIG domain; it reads GRPGVYRMFD…IKEWRPPYNI (79 aa). The 36-residue stretch at 203-238 folds into the UVR domain; sequence NALSDELNASMEKAAMALDFERAAELRDQVALLRRV.

It belongs to the UvrC family. In terms of assembly, interacts with UvrB in an incision complex.

It localises to the cytoplasm. Its function is as follows. The UvrABC repair system catalyzes the recognition and processing of DNA lesions. UvrC both incises the 5' and 3' sides of the lesion. The N-terminal half is responsible for the 3' incision and the C-terminal half is responsible for the 5' incision. This chain is UvrABC system protein C, found in Pseudomonas syringae pv. tomato (strain ATCC BAA-871 / DC3000).